The chain runs to 537 residues: MAAKLIAFDEEARSKLLTGVLKLSKAVKATLGPKGRYVVLERKFGSPLITNDGVTIAKEIDLEDPYENLGAQLAKEVASKTNDVAGDGTTTATVLAEAMVREGMKNVTAGANPIALRRGIEKAVEAVTEEIKKLSRPVSGKRDITEVATISAKDQQIGSIIAEAMEKVGKDGVVTVEEGKSLGMELEFVEGMQFDRGYVSPYFVTDPERMETVLEDPLIVITDKKISNVQEFLPLLEKIVQYGRSFLLIADDVEGEALATLVVNKLRGTFNCVAVKAPGFGDRRKEMLQDIAIVTGGQVISEELGVSFESVTPDMFGHARSVKVDKESTTIVGGKGSSEEIEKRIAQIRKQLETTESEYEKEKLQERLAKLAGGVAVIKVGAATETEMKEKKHRVEDAVSATKAAMEEGIVAGGGVTLVKASTVLDKLPLENDELIGATIVKKALMEPARVIAENAGFAGEVVVEELKKREYPVGFDAVKGEYVDMFEAGIIDPTKVTRSALQNAASIAAMVLTTEALVVEKPEQEKAQPGMPPEEY.

Residues 30–33 (TLGP), 87–91 (DGTTT), glycine 414, 477–479 (DAV), and aspartate 493 contribute to the ATP site.

Belongs to the chaperonin (HSP60) family. Forms a cylinder of 14 subunits composed of two heptameric rings stacked back-to-back. Interacts with the co-chaperonin GroES.

Its subcellular location is the cytoplasm. It carries out the reaction ATP + H2O + a folded polypeptide = ADP + phosphate + an unfolded polypeptide.. In terms of biological role, together with its co-chaperonin GroES, plays an essential role in assisting protein folding. The GroEL-GroES system forms a nano-cage that allows encapsulation of the non-native substrate proteins and provides a physical environment optimized to promote and accelerate protein folding. The chain is Chaperonin GroEL from Coprothermobacter proteolyticus (strain ATCC 35245 / DSM 5265 / OCM 4 / BT).